A 463-amino-acid chain; its full sequence is Phosphoglucosamine mutase (463 aa).

The active-site Phosphoserine intermediate is the S110. Mg(2+) is bound by residues S110, D255, D257, and D259. Residue S110 is modified to Phosphoserine.

Belongs to the phosphohexose mutase family. It depends on Mg(2+) as a cofactor. In terms of processing, activated by phosphorylation.

The catalysed reaction is alpha-D-glucosamine 1-phosphate = D-glucosamine 6-phosphate. Its function is as follows. Catalyzes the conversion of glucosamine-6-phosphate to glucosamine-1-phosphate. This is Phosphoglucosamine mutase from Koribacter versatilis (strain Ellin345).